The sequence spans 159 residues: Small ribosomal subunit protein uS17x (159 aa).

This sequence belongs to the universal ribosomal protein uS17 family.

It localises to the cytoplasm. This is Small ribosomal subunit protein uS17x (RPS11C) from Arabidopsis thaliana (Mouse-ear cress).